Here is a 267-residue protein sequence, read N- to C-terminus: 2-keto-3-deoxy-L-rhamnonate aldolase (267 aa).

The active-site Proton acceptor is the His-49. Gln-151 contacts substrate. Glu-153 serves as a coordination point for Mg(2+). Positions 178 and 179 each coordinate substrate. Mg(2+) is bound at residue Asp-179.

Belongs to the HpcH/HpaI aldolase family. KDR aldolase subfamily. In terms of assembly, homohexamer. Mg(2+) is required as a cofactor.

The enzyme catalyses 2-dehydro-3-deoxy-L-rhamnonate = (S)-lactaldehyde + pyruvate. Catalyzes the reversible retro-aldol cleavage of 2-keto-3-deoxy-L-rhamnonate (KDR) to pyruvate and lactaldehyde. This Salmonella agona (strain SL483) protein is 2-keto-3-deoxy-L-rhamnonate aldolase.